Consider the following 672-residue polypeptide: Glycerophosphocholine phosphodiesterase GPCPD1 (672 aa).

The region spanning 1–115 is the CBM20 domain; that stretch reads MTPSQVAFEI…IIIDDGQFGI (115 aa). Substrate is bound by residues Lys70 and 88 to 89; that span reads HK. Phosphoserine occurs at positions 175 and 424. Residues 318 to 618 enclose the GP-PDE domain; sequence PLDVGHRGAG…DRIYDWMPEQ (301 aa). The residue at position 608 (Tyr608) is a Phosphotyrosine.

It belongs to the glycerophosphoryl diester phosphodiesterase family. As to expression, widely expressed, with highest expression in spinal chord.

It is found in the cytoplasm. Its subcellular location is the cytosol. It catalyses the reaction sn-glycerol 3-phosphocholine + H2O = sn-glycerol 3-phosphate + choline + H(+). May be involved in the negative regulation of skeletal muscle differentiation, independently of its glycerophosphocholine phosphodiesterase activity. In Homo sapiens (Human), this protein is Glycerophosphocholine phosphodiesterase GPCPD1 (GPCPD1).